A 263-amino-acid polypeptide reads, in one-letter code: Cytochrome c oxidase subunit 3 (263 aa).

7 consecutive transmembrane segments (helical) span residues Ile-7–Leu-27, Phe-44–Ile-64, Gly-78–Leu-98, Leu-120–Phe-140, Gly-145–Ala-165, Val-191–Ile-211, and Ile-241–Tyr-261.

It belongs to the cytochrome c oxidase subunit 3 family. As to quaternary structure, component of the cytochrome c oxidase (complex IV, CIV), a multisubunit enzyme composed of a catalytic core of 3 subunits and several supernumerary subunits. The complex exists as a monomer or a dimer and forms supercomplexes (SCs) in the inner mitochondrial membrane with ubiquinol-cytochrome c oxidoreductase (cytochrome b-c1 complex, complex III, CIII).

The protein localises to the mitochondrion inner membrane. The enzyme catalyses 4 Fe(II)-[cytochrome c] + O2 + 8 H(+)(in) = 4 Fe(III)-[cytochrome c] + 2 H2O + 4 H(+)(out). In terms of biological role, component of the cytochrome c oxidase, the last enzyme in the mitochondrial electron transport chain which drives oxidative phosphorylation. The respiratory chain contains 3 multisubunit complexes succinate dehydrogenase (complex II, CII), ubiquinol-cytochrome c oxidoreductase (cytochrome b-c1 complex, complex III, CIII) and cytochrome c oxidase (complex IV, CIV), that cooperate to transfer electrons derived from NADH and succinate to molecular oxygen, creating an electrochemical gradient over the inner membrane that drives transmembrane transport and the ATP synthase. Cytochrome c oxidase is the component of the respiratory chain that catalyzes the reduction of oxygen to water. Electrons originating from reduced cytochrome c in the intermembrane space (IMS) are transferred via the dinuclear copper A center (CU(A)) of subunit 2 and heme A of subunit 1 to the active site in subunit 1, a binuclear center (BNC) formed by heme A3 and copper B (CU(B)). The BNC reduces molecular oxygen to 2 water molecules using 4 electrons from cytochrome c in the IMS and 4 protons from the mitochondrial matrix. This Plasmodium vivax protein is Cytochrome c oxidase subunit 3 (COIII).